Reading from the N-terminus, the 171-residue chain is METHKHGPSLAWWSLLLLLLGLLMPPAIAQDLTYREAVLRAVDAFNQQSSEANLYRLLSMDPQQLEDAKPYTPQPVSFTVKETECPRTTWKLPEQCDFKEDGLVKRCVGTVTRYQAWDSFDIRCNRAQESPEPTGLRKRLRKFRNKIKEKLKKIGQKIQGFVPKLAPRTDY.

An N-terminal signal peptide occupies residues 1–29 (METHKHGPSLAWWSLLLLLLGLLMPPAIA). Disulfide bonds link cysteine 85–cysteine 96 and cysteine 107–cysteine 124.

The protein belongs to the cathelicidin family. As to expression, neutrophils.

The protein localises to the secreted. CAP18 binds to the lipid A moiety of bacterial lipopolysaccharides (LPS), a glycolipid present in the outer membrane of all Gram-negative bacteria. Has antibiotic activity. In Oryctolagus cuniculus (Rabbit), this protein is Antimicrobial protein CAP18 (CAP18).